Here is a 135-residue protein sequence, read N- to C-terminus: Large ribosomal subunit protein eL32 (135 aa).

A Glycyl lysine isopeptide (Lys-Gly) (interchain with G-Cter in SUMO2) cross-link involves residue Lys-9. Lys-50 is subject to N6-succinyllysine. Ser-62 is modified (phosphoserine).

This sequence belongs to the eukaryotic ribosomal protein eL32 family. Component of the large ribosomal subunit.

It localises to the cytoplasm. Its function is as follows. Component of the large ribosomal subunit. The ribosome is a large ribonucleoprotein complex responsible for the synthesis of proteins in the cell. This Macaca fascicularis (Crab-eating macaque) protein is Large ribosomal subunit protein eL32 (RPL32).